We begin with the raw amino-acid sequence, 155 residues long: Ribosomal RNA large subunit methyltransferase H (155 aa).

Residues Leu-72, Gly-104, and Leu-123–Phe-128 each bind S-adenosyl-L-methionine.

Belongs to the RNA methyltransferase RlmH family. As to quaternary structure, homodimer.

It is found in the cytoplasm. It catalyses the reaction pseudouridine(1915) in 23S rRNA + S-adenosyl-L-methionine = N(3)-methylpseudouridine(1915) in 23S rRNA + S-adenosyl-L-homocysteine + H(+). Its function is as follows. Specifically methylates the pseudouridine at position 1915 (m3Psi1915) in 23S rRNA. This Cytophaga hutchinsonii (strain ATCC 33406 / DSM 1761 / CIP 103989 / NBRC 15051 / NCIMB 9469 / D465) protein is Ribosomal RNA large subunit methyltransferase H.